The chain runs to 118 residues: Beta-defensin 126 (118 aa).

An N-terminal signal peptide occupies residues 1–20; that stretch reads MKSLLFTLAVFMLLAQLVSG. Residues 21-63 are in vitro binds to LPS, mediates antimicrobial activity and inhibits LPS-mediated inflammation; it reads SWYVKKCLNDVGICKKKCKPEELHVKNGWAMCGKQRDCCVPAD. 3 disulfides stabilise this stretch: Cys27-Cys58, Cys34-Cys52, and Cys38-Cys59.

This sequence belongs to the beta-defensin family. In terms of assembly, homodimer or homooligomer; disulfide-linked. Post-translationally, O-glycosylated; glycans contain alpha(2,3)-linked sialic acids.

It is found in the secreted. Highly glycosylated atypical beta-defensin involved in several aspects of sperm function. Facilitates sperm transport in the female reproductive tract and contributes to sperm protection against immunodetection; both functions are probably implicating the negative surface charge provided by its O-linked oligosaccharides in the sperm glycocalyx. Involved in binding of sperm to oviductal epithelial cells to form a sperm reservoir until ovulation. Release from the sperm surface during capacitation and ovaluation by an elevation of oviductal fluid pH is unmasking other surface components and allows sperm to penetrate the cumulus matrix and bind to the zona pellucida of the oocyte. In vitro has antimicrobial activity and may inhibit LPS-mediated inflammation. This Pongo pygmaeus (Bornean orangutan) protein is Beta-defensin 126 (DEFB126).